The primary structure comprises 445 residues: ATP-dependent protease ATPase subunit HslU (445 aa).

Residues I17, 59-64 (GVGKTE), D254, E319, and R391 each bind ATP.

It belongs to the ClpX chaperone family. HslU subfamily. As to quaternary structure, a double ring-shaped homohexamer of HslV is capped on each side by a ring-shaped HslU homohexamer. The assembly of the HslU/HslV complex is dependent on binding of ATP.

It localises to the cytoplasm. In terms of biological role, ATPase subunit of a proteasome-like degradation complex; this subunit has chaperone activity. The binding of ATP and its subsequent hydrolysis by HslU are essential for unfolding of protein substrates subsequently hydrolyzed by HslV. HslU recognizes the N-terminal part of its protein substrates and unfolds these before they are guided to HslV for hydrolysis. The polypeptide is ATP-dependent protease ATPase subunit HslU (Pseudomonas savastanoi pv. phaseolicola (strain 1448A / Race 6) (Pseudomonas syringae pv. phaseolicola (strain 1448A / Race 6))).